A 158-amino-acid chain; its full sequence is Small ribosomal subunit protein uS9 (158 aa).

This sequence belongs to the universal ribosomal protein uS9 family.

This is Small ribosomal subunit protein uS9 from Rhodopseudomonas palustris (strain BisA53).